A 495-amino-acid polypeptide reads, in one-letter code: Glutamate--tRNA ligase (495 aa).

The short motif at 14–24 (PSPTGYLHIGS) is the 'HIGH' region element. The 'KMSKS' region motif lies at 255 to 259 (KLSKR). ATP is bound at residue Lys-258.

Belongs to the class-I aminoacyl-tRNA synthetase family. Glutamate--tRNA ligase type 1 subfamily. Monomer.

The protein localises to the cytoplasm. It catalyses the reaction tRNA(Glu) + L-glutamate + ATP = L-glutamyl-tRNA(Glu) + AMP + diphosphate. Functionally, catalyzes the attachment of glutamate to tRNA(Glu) in a two-step reaction: glutamate is first activated by ATP to form Glu-AMP and then transferred to the acceptor end of tRNA(Glu). This is Glutamate--tRNA ligase from Herpetosiphon aurantiacus (strain ATCC 23779 / DSM 785 / 114-95).